The chain runs to 51 residues: uncharacterized protein (51 aa).

Residues 10-29 (LFLYHPLFLLLLYIYLVLFI) form a helical membrane-spanning segment.

It localises to the plastid. Its subcellular location is the chloroplast membrane. This is an uncharacterized protein from Anthoceros angustus (Hornwort).